Reading from the N-terminus, the 424-residue chain is Zinc finger and BTB domain-containing protein 6 (424 aa).

Residues 33–97 form the BTB domain; that stretch reads CDVSIYINDT…CYTGALEVKR (65 aa). The residue at position 202 (Ser202) is a Phosphoserine. 4 consecutive C2H2-type zinc fingers follow at residues 301 to 323, 326 to 348, 354 to 376, and 382 to 405; these read HQCP…LKMH, FLCL…IRGH, FQCT…LNIH, and YKCH…TSLH. The interval 403 to 424 is disordered; that stretch reads SLHGRSSGEKLPRHDLERQNLL. Positions 408–424 are enriched in basic and acidic residues; that stretch reads SSGEKLPRHDLERQNLL.

It is found in the nucleus. Functionally, may be involved in transcriptional regulation. This chain is Zinc finger and BTB domain-containing protein 6 (ZBTB6), found in Bos taurus (Bovine).